Consider the following 314-residue polypeptide: Putative glycosyltransferase ORF31 (314 aa).

This sequence belongs to the glycosyltransferase group 1 family.

The sequence is that of Putative glycosyltransferase ORF31 from Haloarcula hispanica (His1V).